The sequence spans 196 residues: Adenylate kinase (196 aa).

9–17 lines the ATP pocket; sequence GIPGVGKST.

It belongs to the archaeal adenylate kinase family.

It is found in the cytoplasm. The enzyme catalyses AMP + ATP = 2 ADP. In Thermococcus kodakarensis (strain ATCC BAA-918 / JCM 12380 / KOD1) (Pyrococcus kodakaraensis (strain KOD1)), this protein is Adenylate kinase.